The sequence spans 397 residues: Methyltransferase/ribosomally synthesized type I borosin cyclic peptide precursor mroMa1 (397 aa).

The methyltransferase domain stretch occupies residues M1 to R246. Catalysis depends on residues R70, Y74, and Y96. Residues Y96, H98, V101, A128, Q170, G208, S239, and T240 each contribute to the S-adenosyl-L-methionine site. A clasp domain region spans residues T247–L365. The precursor leader stretch occupies residues P366–A388. 2 positions are modified to N-methylisoleucine: I391 and I392. Y393 carries the N-methyltyrosine modification. I394 carries the N-methylisoleucine modification. V395 carries the post-translational modification N-methylvaline.

This sequence in the N-terminal section; belongs to the precorrin methyltransferase family. Homodimer. In terms of processing, mroMA automethylates at Ile-391, Ile-392, Tyr-393, Ile-394 and Val-395 before being processed by the a prolyloligopeptidase which likely forms a peptidyl ester upon removal of the follower propeptide, which then undergoes macrocyclization with the N-terminus of the modified core peptide. Peptide backbone alpha-N-methylations change the physicochemical properties of amide bonds to provide structural constraints and other favorable characteristics including biological membrane permeability to peptides.

Its pathway is secondary metabolite biosynthesis. Functionally, fusion protein of the methyltransferase mroM1 and a type I borosin core peptide; part of the gene cluster that mediates the biosynthesis of a type I borosin, a highly methylated cyclic peptide with potent biological activities. Type I borosins derive from the C-terminus of the fusion protein, and it is the same protein that methylates its own C-terminus using S-adenosyl methionine (SAM). The C-terminus is subsequently cleaved off and macrocyclized by a prolyloligopeptidase to give the final product. This is Methyltransferase/ribosomally synthesized type I borosin cyclic peptide precursor mroMa1 from Mycena rosella (Pink bonnet).